Here is a 290-residue protein sequence, read N- to C-terminus: MISINFNNFFKTLLLILIAFTLHGCDSILFNPHGIIAIQECSILLISFLIMLFVIIPVIFMTIYFSVKYRASNINAKYKPDWCDSKKIEIIVWTIPISIILFLAFVTWNYSHILDPKKSIISKYKPIKIDVVSLDWRWLFIYPEYHIATINEIMFPINRSIIFHITSNSVMNSFFIPSLGSQIYAMPGMMTTLNLMSNSPGKYKGISSNYSGKGFSNMKFTAISVLNIKDFENWIKKAQQSPKKLNKMSIFNIISLPNENHFIEYFSDVKKNLFYEIINQTYSKNKVFKH.

Positions 1–24 (MISINFNNFFKTLLLILIAFTLHG) are cleaved as a signal peptide. Residue cysteine 25 is the site of N-palmitoyl cysteine attachment. Cysteine 25 is lipidated: S-diacylglycerol cysteine. Over 25–42 (CDSILFNPHGIIAIQECS) the chain is Extracellular. The chain crosses the membrane as a helical span at residues 43 to 63 (ILLISFLIMLFVIIPVIFMTI). Residues 64-87 (YFSVKYRASNINAKYKPDWCDSKK) lie on the Cytoplasmic side of the membrane. Residues 88–108 (IEIIVWTIPISIILFLAFVTW) form a helical membrane-spanning segment. Over 109–290 (NYSHILDPKK…TYSKNKVFKH (182 aa)) the chain is Extracellular.

Belongs to the cytochrome c oxidase subunit 2 family. Heterooctamer of two A chains, two B chains, two C chains and two D chains.

The protein resides in the cell membrane. Its function is as follows. Cytochrome bo(3) ubiquinol terminal oxidase is the component of the aerobic respiratory chain of E.coli that predominates when cells are grown at high aeration. Has proton pump activity across the membrane in addition to electron transfer, pumping 2 protons/electron. The chain is Cytochrome bo(3) ubiquinol oxidase subunit 2 (cyoA) from Buchnera aphidicola subsp. Schizaphis graminum (strain Sg).